Reading from the N-terminus, the 379-residue chain is Queuine tRNA-ribosyltransferase (379 aa).

Residue aspartate 94 is the Proton acceptor of the active site. Residues 94-98 (DSGGF), aspartate 148, glutamine 191, and glycine 218 each bind substrate. The interval 249-255 (GVGSPDS) is RNA binding. The active-site Nucleophile is aspartate 268. Residues 273-277 (TRIAR) are RNA binding; important for wobble base 34 recognition. Zn(2+) contacts are provided by cysteine 306, cysteine 308, cysteine 311, and histidine 337.

The protein belongs to the queuine tRNA-ribosyltransferase family. In terms of assembly, homodimer. Within each dimer, one monomer is responsible for RNA recognition and catalysis, while the other monomer binds to the replacement base PreQ1. It depends on Zn(2+) as a cofactor.

The enzyme catalyses 7-aminomethyl-7-carbaguanine + guanosine(34) in tRNA = 7-aminomethyl-7-carbaguanosine(34) in tRNA + guanine. It participates in tRNA modification; tRNA-queuosine biosynthesis. Catalyzes the base-exchange of a guanine (G) residue with the queuine precursor 7-aminomethyl-7-deazaguanine (PreQ1) at position 34 (anticodon wobble position) in tRNAs with GU(N) anticodons (tRNA-Asp, -Asn, -His and -Tyr). Catalysis occurs through a double-displacement mechanism. The nucleophile active site attacks the C1' of nucleotide 34 to detach the guanine base from the RNA, forming a covalent enzyme-RNA intermediate. The proton acceptor active site deprotonates the incoming PreQ1, allowing a nucleophilic attack on the C1' of the ribose to form the product. After dissociation, two additional enzymatic reactions on the tRNA convert PreQ1 to queuine (Q), resulting in the hypermodified nucleoside queuosine (7-(((4,5-cis-dihydroxy-2-cyclopenten-1-yl)amino)methyl)-7-deazaguanosine). The protein is Queuine tRNA-ribosyltransferase of Listeria innocua serovar 6a (strain ATCC BAA-680 / CLIP 11262).